The chain runs to 149 residues: Calmodulin, striated muscle (149 aa).

EF-hand domains follow at residues glutamate 8–asparagine 43, proline 44–aspartate 79, aspartate 81–lysine 116, and leucine 117–lysine 149. The Ca(2+) site is built by aspartate 21, aspartate 23, aspartate 25, cysteine 27, glutamate 32, aspartate 57, aspartate 59, serine 61, threonine 63, glutamate 68, aspartate 94, aspartate 96, asparagine 98, tyrosine 100, and glutamate 105. Lysine 116 carries the N6,N6,N6-trimethyllysine modification. Residues aspartate 130, asparagine 132, aspartate 134, glutamine 136, and glutamate 141 each coordinate Ca(2+).

The protein belongs to the calmodulin family.

This chain is Calmodulin, striated muscle (CCM1), found in Gallus gallus (Chicken).